The primary structure comprises 340 residues: GTP 3',8-cyclase (340 aa).

The Radical SAM core domain maps to 20 to 246; the sequence is RFERQYVYLR…PKALSDGPAK (227 aa). R29 is a binding site for GTP. Residues C36 and C40 each contribute to the [4Fe-4S] cluster site. Residue Y42 coordinates S-adenosyl-L-methionine. A [4Fe-4S] cluster-binding site is contributed by C43. Residue R79 coordinates GTP. G83 contributes to the S-adenosyl-L-methionine binding site. T110 is a GTP binding site. Position 134 (S134) interacts with S-adenosyl-L-methionine. K171 contacts GTP. Residue M205 participates in S-adenosyl-L-methionine binding. Positions 268 and 271 each coordinate [4Fe-4S] cluster. Residue 273–275 coordinates GTP; it reads RLR. C285 contributes to the [4Fe-4S] cluster binding site.

This sequence belongs to the radical SAM superfamily. MoaA family. As to quaternary structure, monomer and homodimer. Requires [4Fe-4S] cluster as cofactor.

The enzyme catalyses GTP + AH2 + S-adenosyl-L-methionine = (8S)-3',8-cyclo-7,8-dihydroguanosine 5'-triphosphate + 5'-deoxyadenosine + L-methionine + A + H(+). It functions in the pathway cofactor biosynthesis; molybdopterin biosynthesis. Catalyzes the cyclization of GTP to (8S)-3',8-cyclo-7,8-dihydroguanosine 5'-triphosphate. In Actinobacillus pleuropneumoniae serotype 7 (strain AP76), this protein is GTP 3',8-cyclase.